The chain runs to 464 residues: PH domain-containing rcdII (464 aa).

Residues 8–210 (KSSKEIIEDL…NTKLMSNLEI (203 aa)) are a coiled coil. Disordered stretches follow at residues 215–290 (NFNN…NSSG) and 317–347 (CNNN…SNSN). 3 stretches are compositionally biased toward low complexity: residues 234–288 (STTT…SSNS), 317–328 (CNNNNNNNNGNS), and 338–347 (RSRSSSSNSN). Residues 353-461 (KIVKEGWLKR…WKDTISSLMP (109 aa)) enclose the PH domain.

This chain is PH domain-containing rcdII (rcdII), found in Dictyostelium discoideum (Social amoeba).